Consider the following 1335-residue polypeptide: Regulatory-associated protein of mTOR (1335 aa).

2 positions are modified to phosphoserine: S44 and S122. S696 carries the post-translational modification Phosphoserine; by MAPK8. O-linked (GlcNAc) threonine glycosylation occurs at T700. T706 is subject to Phosphothreonine; by MAPK8. Phosphoserine; by RPS6KA1 occurs at positions 719 and 721. A Phosphoserine; by AMPK and RPS6KA1 modification is found at S722. The residue at position 738 (S738) is a Phosphoserine. S791 is modified (phosphoserine; by PKA). S792 bears the Phosphoserine; by AMPK mark. Phosphoserine occurs at positions 836 and 855. The segment at 850 to 943 (VLDTSSLTQS…PEQTADDADD (94 aa)) is disordered. Polar residues predominate over residues 851–866 (LDTSSLTQSAPASPTN). Position 859 is a phosphoserine; by MTOR (S859). Residue S863 is modified to Phosphoserine; by MAPK8, MTOR and NLK. T865 carries the phosphothreonine modification. Over residues 874–887 (AGGSPPASSTSSSS) the composition is skewed to low complexity. S877 carries the phosphoserine; by TBK1 modification. Glycyl lysine isopeptide (Lys-Gly) (interchain with G-Cter in ubiquitin) cross-links involve residues K932 and K948. A Phosphoserine modification is found at S982. WD repeat units follow at residues 1020–1061 (NRNP…DYFH), 1065–1106 (PRYT…EKNP), 1121–1160 (TTRG…KVQD), 1164–1203 (GADS…SECR), 1209–1249 (EHTA…SVNV), 1251–1291 (QIVK…NNIK), and 1299–1335 (QRVG…KRVR). K1097 carries the N6-acetyllysine modification.

This sequence belongs to the WD repeat RAPTOR family. As to quaternary structure, part of the mechanistic target of rapamycin complex 1 (mTORC1) which contains MTOR, MLST8 and RPTOR. mTORC1 associates with AKT1S1/PRAS40, which inhibits its activity. mTORC1 associates with DEPTOR, which regulates its activity. mTORC1 binds to and is inhibited by FKBP12-rapamycin. Forms a complex with MTOR under both leucine-rich and -poor conditions. Interacts with (via TOS motifs) EIF4EBP1 and RPS6KB1; interaction is independent of its association with MTOR. Binds preferentially to poorly or non-phosphorylated forms of EIF4EBP1, and this binding is critical to the ability of MTOR to catalyze phosphorylation. Interacts with ULK1 in a nutrient-dependent manner; the interaction is reduced during starvation. Interacts with GTP-bound form of RagA/RRAGA or RagB/RRAGB and GDP-bound form of RagC/RRAGC or RagD/RRAGD, promoting recruitment of mTORC1 to the lysosomes. Interacts (when phosphorylated by AMPK) with 14-3-3 protein, leading to inhibition of its activity. Interacts with SPAG5; SPAG5 competes with MTOR for RPTOR-binding, resulting in decreased mTORC1 formation. Interacts with WAC; WAC positively regulates MTOR activity by promoting the assembly of the TTT complex composed of TELO2, TTI1 and TTI2 and the RUVBL complex composed of RUVBL1 and RUVBL2 into the TTT-RUVBL complex which leads to the dimerization of the mTORC1 complex and its subsequent activation. Interacts with G3BP1. The complex formed with G3BP1 and SPAG5 is increased by oxidative stress. Interacts with HTR6. Interacts with PIH1D1. Interacts with LARP1. Interacts with BRAT1. Interacts with SIK3. Interacts with SLC38A7; this interaction mediates the recruitment of mTORC1 to the lysosome and its subsequent activation. In terms of assembly, (Microbial infection) Interacts with vaccinia virus protein F17; this interaction dysregulates mTOR. Insulin-stimulated phosphorylation at Ser-863 by MTOR and MAPK8 regulates mTORC1 activity. Phosphorylated at Ser-863 by NLK in response to stress, disrupting the interaction with small GTPases Rag (RagA/RRAGA, RagB/RRAGB, RagC/RRAGC and/or RagD/RRAGD), thereby preventing lysosome recruitment and activation of the mTORC1 complex. Osmotic stress also induces phosphorylation at Ser-696, Thr-706 and Ser-863 by MAPK8. Ser-863 phosphorylation is required for phosphorylation at Ser-855 and Ser-859. In response to nutrient limitation, phosphorylated at Ser-722 and Ser-792 by AMPK; phosphorylation promotes interaction with 14-3-3 proteins, leading to negative regulation of the mTORC1 complex. Phosphorylation at Ser-722 and Ser-792 by AMPK in response to glucose starvation inhibits O-GlcNAcylation by OGT and subsequent activation of mTORC1. In response to growth factors, phosphorylated at Ser-719, Ser-721 and Ser-722 by RPS6KA1, which stimulates mTORC1 activity. Phosphorylation at Ser-791 by PKA downstream of cAMP inhibits the mTORC1 complex. Phosphorylated at Ser-877 by TBK1, leading to negative regulation of the mTORC1 complex. Post-translationally, O-GlcNAcylated by OGT upon glucose sufficiency, promoting interaction with small GTPases Rag (RagA/RRAGA, RagB/RRAGB, RagC/RRAGC and/or RagD/RRAGD) and subsequent recruitment of mTORC1 to lysosomal membranes, leading to activation of the mTORC1 complex. Phosphorylation at Ser-722 and Ser-792 by AMPK in response to glucose starvation inhibits O-GlcNAcylation. In terms of processing, acetylation at Lys-1097 by EP300/p300 in response to leucine metabolite acetyl-coA promotes its activity, leading to activation of the mTORC1 complex. Acetylation is decreased in response to fasting. Ubiquitinated, leading to its degradation by the proteasome. Deubiquitinated by OTUB1 via a non-catalytic mechanism. Ubiquitinated by an E3 ubiquitin ligase complex containing VHL. In terms of tissue distribution, highly expressed in skeletal muscle, and in a lesser extent in brain, lung, small intestine, kidney and placenta. Widely expressed, with highest levels in nasal mucosa and pituitary and lowest in spleen.

The protein localises to the lysosome membrane. It is found in the cytoplasm. Its subcellular location is the cytoplasmic granule. Component of the mechanistic target of rapamycin complex 1 (mTORC1), an evolutionarily conserved central nutrient sensor that stimulates anabolic reactions and macromolecule biosynthesis to promote cellular biomass generation and growth. In response to nutrients, growth factors or amino acids, mTORC1 is recruited to the lysosome membrane and promotes protein, lipid and nucleotide synthesis by phosphorylating several substrates, such as ribosomal protein S6 kinase (RPS6KB1 and RPS6KB2) and EIF4EBP1 (4E-BP1). In the same time, it inhibits catabolic pathways by phosphorylating the autophagy initiation components ULK1 and ATG13, as well as transcription factor TFEB, a master regulators of lysosomal biogenesis and autophagy. The mTORC1 complex is inhibited in response to starvation and amino acid depletion. Within the mTORC1 complex, RPTOR acts both as a molecular adapter, which (1) mediates recruitment of mTORC1 to lysosomal membranes via interaction with small GTPases Rag (RagA/RRAGA, RagB/RRAGB, RagC/RRAGC and/or RagD/RRAGD), and a (2) substrate-specific adapter, which promotes substrate specificity by binding to TOS motif-containing proteins and direct them towards the active site of the MTOR kinase domain for phosphorylation. mTORC1 complex regulates many cellular processes, such as odontoblast and osteoclast differentiation or neuronal transmission. mTORC1 complex in excitatory neuronal transmission is required for the prosocial behavior induced by the psychoactive substance lysergic acid diethylamide (LSD). The protein is Regulatory-associated protein of mTOR of Homo sapiens (Human).